Reading from the N-terminus, the 742-residue chain is MTTIKTSNLGFPRLGRKREWKKAIESYWAKKISKEELDQTLTDLHKENLLLQKYYHLDSIPVGDFSLYDHILDTSLLFNIIPERFQGRTIDDDLLFDIARGNKDHVASALIKWFNTNYHYIVPEWDNVEPKVSRNVLLDRFKYAQSLNVNAHPVIVGPITFVKLSKGGHQTFEEKVKTLLPLYKEVFESLIDAGAEYIQVDEPILVTDDSESYENITREAYDYFEKAGVAKKLVIQTYFERAHLKFLSSLPVGGLGLDFVHDNGYNLKQIEAGDFDKSKTLYAGIIDGRNVWASDIEAKKVLIDKLLAHTNELVIQPSSSLLHVPVSLDDETLDTSVGEGLSFATEKLDELDALRRLLNQNDSVKYDKLKARYERFQNQSFKNLDYDFESVRTSRQSPFAQRIEQQQKRLNLPDLPTTTIGSFPQSREVRKYRADWKNKRITDEAYETFLKNEIARWIKIQEDIGLDVLVHGEFERNDMVEFFGEKLQGFLVTKFGWVQSYGSRAVKPPIIYGDVKWTAPLTVDETVYAQSLTDKPVKGMLTGPVTILNWSFERVDLPRKVVQDQIALAINEEVLALEAAGIKVIQVDEPALREGLPLRSEYHEQYLKDAVLSFKLATSSVRDETQIHTHMCYSQFGQIIHAIHDLDADVISIETSRSHGDLIKDFEDINYDLGIGLGVYDIHSPRIPTKEEITTAINRSLQQIDRSLFWVNPDCGLKTRKEEEVKDALTVLVNAVKAKRQE.

Residues 18–21 and lysine 112 each bind 5-methyltetrahydropteroyltri-L-glutamate; that span reads REWK. L-homocysteine contacts are provided by residues 420 to 422 and glutamate 473; that span reads IGS. L-methionine is bound by residues 420–422 and glutamate 473; that span reads IGS. Residue tryptophan 550 participates in 5-methyltetrahydropteroyltri-L-glutamate binding. Residue aspartate 588 participates in L-homocysteine binding. Aspartate 588 serves as a coordination point for L-methionine. Glutamate 594 is a binding site for 5-methyltetrahydropteroyltri-L-glutamate. Histidine 630, cysteine 632, and glutamate 654 together coordinate Zn(2+). Histidine 683 (proton donor) is an active-site residue. Zn(2+) is bound at residue cysteine 715.

This sequence belongs to the vitamin-B12 independent methionine synthase family. Requires Zn(2+) as cofactor.

It catalyses the reaction 5-methyltetrahydropteroyltri-L-glutamate + L-homocysteine = tetrahydropteroyltri-L-glutamate + L-methionine. The protein operates within amino-acid biosynthesis; L-methionine biosynthesis via de novo pathway; L-methionine from L-homocysteine (MetE route): step 1/1. Functionally, catalyzes the transfer of a methyl group from 5-methyltetrahydrofolate to homocysteine resulting in methionine formation. The protein is 5-methyltetrahydropteroyltriglutamate--homocysteine methyltransferase of Staphylococcus aureus (strain Mu3 / ATCC 700698).